The primary structure comprises 590 residues: Transcription factor bHLH13 (590 aa).

Disordered regions lie at residues 274-296 (LQHHQHHQQQQQQPPQQQQHRQF) and 385-439 (AASS…EAER). The span at 281-293 (QQQQQQPPQQQQH) shows a compositional bias: low complexity. A compositionally biased stretch (basic residues) spans 416 to 425 (RPRKRGRRPA). A bHLH domain is found at 429-478 (AEALNHVEAERQRREKLNQRFYALRSVVPNISKMDKASLLGDAVSYINEL).

Homodimer.

It is found in the nucleus. The protein is Transcription factor bHLH13 (BHLH13) of Arabidopsis thaliana (Mouse-ear cress).